A 584-amino-acid polypeptide reads, in one-letter code: DNA ligase (584 aa).

Glutamate 249 serves as a coordination point for ATP. The active-site N6-AMP-lysine intermediate is the lysine 251. ATP contacts are provided by arginine 256, arginine 271, glutamate 301, phenylalanine 341, arginine 416, and lysine 422.

Belongs to the ATP-dependent DNA ligase family. Mg(2+) serves as cofactor.

The catalysed reaction is ATP + (deoxyribonucleotide)n-3'-hydroxyl + 5'-phospho-(deoxyribonucleotide)m = (deoxyribonucleotide)n+m + AMP + diphosphate.. Its function is as follows. DNA ligase that seals nicks in double-stranded DNA during DNA replication, DNA recombination and DNA repair. The chain is DNA ligase from Pyrobaculum neutrophilum (strain DSM 2338 / JCM 9278 / NBRC 100436 / V24Sta) (Thermoproteus neutrophilus).